A 459-amino-acid polypeptide reads, in one-letter code: Trigger factor (459 aa).

In terms of domain architecture, PPIase FKBP-type spans 166–245 (GDFANIDLTA…VNSVKAEELP (80 aa)).

The protein belongs to the FKBP-type PPIase family. Tig subfamily.

Its subcellular location is the cytoplasm. It carries out the reaction [protein]-peptidylproline (omega=180) = [protein]-peptidylproline (omega=0). In terms of biological role, involved in protein export. Acts as a chaperone by maintaining the newly synthesized protein in an open conformation. Functions as a peptidyl-prolyl cis-trans isomerase. The sequence is that of Trigger factor from Bifidobacterium longum (strain DJO10A).